The chain runs to 285 residues: ATP synthase gamma chain (285 aa).

Belongs to the ATPase gamma chain family. F-type ATPases have 2 components, CF(1) - the catalytic core - and CF(0) - the membrane proton channel. CF(1) has five subunits: alpha(3), beta(3), gamma(1), delta(1), epsilon(1). CF(0) has three main subunits: a, b and c.

The protein resides in the cell inner membrane. In terms of biological role, produces ATP from ADP in the presence of a proton gradient across the membrane. The gamma chain is believed to be important in regulating ATPase activity and the flow of protons through the CF(0) complex. The polypeptide is ATP synthase gamma chain (Protochlamydia amoebophila (strain UWE25)).